The sequence spans 186 residues: Large ribosomal subunit protein uL5 (186 aa).

Belongs to the universal ribosomal protein uL5 family. Part of the 50S ribosomal subunit; part of the 5S rRNA/L5/L18/L25 subcomplex. Contacts the 5S rRNA and the P site tRNA. Forms a bridge to the 30S subunit in the 70S ribosome.

This is one of the proteins that bind and probably mediate the attachment of the 5S RNA into the large ribosomal subunit, where it forms part of the central protuberance. In the 70S ribosome it contacts protein S13 of the 30S subunit (bridge B1b), connecting the 2 subunits; this bridge is implicated in subunit movement. Contacts the P site tRNA; the 5S rRNA and some of its associated proteins might help stabilize positioning of ribosome-bound tRNAs. The polypeptide is Large ribosomal subunit protein uL5 (Cereibacter sphaeroides (strain ATCC 17023 / DSM 158 / JCM 6121 / CCUG 31486 / LMG 2827 / NBRC 12203 / NCIMB 8253 / ATH 2.4.1.) (Rhodobacter sphaeroides)).